The following is a 367-amino-acid chain: Apolipoprotein A-V (367 aa).

Residues 1 to 20 (MVAVLTWALALLSAFATVQT) form the signal peptide. Position 56 is a phosphoserine (Ser-56). The tract at residues 71–90 (LGPLSGQGREPPGLPHDPEG) is disordered.

This sequence belongs to the apolipoprotein A1/A4/E family. Interacts with GPIHBP1. Interacts with SORL1; this interaction leads to APOA5 internalization and sorting either to lysosomes and degradation, or to the trans-Golgi network. In terms of processing, phosphorylated by FAM20C in the extracellular medium.

The protein resides in the secreted. The protein localises to the early endosome. It is found in the late endosome. It localises to the golgi apparatus. Its subcellular location is the trans-Golgi network. Minor apolipoprotein mainly associated with HDL and to a lesser extent with VLDL. May also be associated with chylomicrons. Important determinant of plasma triglyceride (TG) levels by both being a potent stimulator of apo-CII lipoprotein lipase (LPL) TG hydrolysis and an inhibitor of the hepatic VLDL-TG production rate (without affecting the VLDL-apoB production rate). Activates poorly lecithin:cholesterol acyltransferase (LCAT) and does not enhance efflux of cholesterol from macrophages. Binds heparin. The protein is Apolipoprotein A-V (APOA5) of Neomonachus schauinslandi (Hawaiian monk seal).